Reading from the N-terminus, the 644-residue chain is ATP-dependent zinc metalloprotease FtsH (644 aa).

At 1–4 (MAKN) the chain is on the cytoplasmic side. Residues 5–25 (LILWLVIAVVLMSVFQSFGPS) form a helical membrane-spanning segment. Over 26–98 (ESNGRKVDYS…VGEPPEEPSL (73 aa)) the chain is Periplasmic. Residues 99 to 119 (LASIFISWFPMLLLIGVWIFF) traverse the membrane as a helical segment. Topologically, residues 120 to 644 (MRQMQGGGGK…NTMSEQLGDK (525 aa)) are cytoplasmic. 192–199 (GPPGTGKT) lines the ATP pocket. His414 is a binding site for Zn(2+). The active site involves Glu415. The Zn(2+) site is built by His418 and Asp492. Residues 598-644 (VRPPAGWEEPGASNNSGDNGSPKAPRPVDEPRTPNPGNTMSEQLGDK) form a disordered region. A compositionally biased stretch (polar residues) spans 632-644 (NPGNTMSEQLGDK).

The protein in the central section; belongs to the AAA ATPase family. In the C-terminal section; belongs to the peptidase M41 family. Homohexamer. Zn(2+) serves as cofactor.

It localises to the cell inner membrane. Its function is as follows. Acts as a processive, ATP-dependent zinc metallopeptidase for both cytoplasmic and membrane proteins. Plays a role in the quality control of integral membrane proteins. This Shigella flexneri protein is ATP-dependent zinc metalloprotease FtsH.